We begin with the raw amino-acid sequence, 257 residues long: Tryptophan synthase alpha chain (257 aa).

Catalysis depends on proton acceptor residues Glu46 and Asp57.

The protein belongs to the TrpA family. As to quaternary structure, tetramer of two alpha and two beta chains.

It carries out the reaction (1S,2R)-1-C-(indol-3-yl)glycerol 3-phosphate + L-serine = D-glyceraldehyde 3-phosphate + L-tryptophan + H2O. It participates in amino-acid biosynthesis; L-tryptophan biosynthesis; L-tryptophan from chorismate: step 5/5. Functionally, the alpha subunit is responsible for the aldol cleavage of indoleglycerol phosphate to indole and glyceraldehyde 3-phosphate. This is Tryptophan synthase alpha chain from Parabacteroides distasonis (strain ATCC 8503 / DSM 20701 / CIP 104284 / JCM 5825 / NCTC 11152).